The primary structure comprises 655 residues: Fructose-1,6-bisphosphatase class 3 (655 aa).

The protein belongs to the FBPase class 3 family. It depends on Mn(2+) as a cofactor.

It catalyses the reaction beta-D-fructose 1,6-bisphosphate + H2O = beta-D-fructose 6-phosphate + phosphate. It functions in the pathway carbohydrate biosynthesis; gluconeogenesis. In Porphyromonas gingivalis (strain ATCC BAA-308 / W83), this protein is Fructose-1,6-bisphosphatase class 3.